An 89-amino-acid polypeptide reads, in one-letter code: Small ribosomal subunit protein uS15 (89 aa).

The protein belongs to the universal ribosomal protein uS15 family. As to quaternary structure, part of the 30S ribosomal subunit. Forms a bridge to the 50S subunit in the 70S ribosome, contacting the 23S rRNA.

Functionally, one of the primary rRNA binding proteins, it binds directly to 16S rRNA where it helps nucleate assembly of the platform of the 30S subunit by binding and bridging several RNA helices of the 16S rRNA. Forms an intersubunit bridge (bridge B4) with the 23S rRNA of the 50S subunit in the ribosome. The polypeptide is Small ribosomal subunit protein uS15 (Rhizobium leguminosarum bv. trifolii (strain WSM2304)).